A 381-amino-acid chain; its full sequence is Homoserine O-succinyltransferase (381 aa).

Positions 53–361 (ILICHALSGS…DSVHGHDAFL (309 aa)) constitute an AB hydrolase-1 domain. The active-site Nucleophile is the Ser157. Arg227 is a binding site for substrate. Residues Asp324 and His357 contribute to the active site. Asp358 serves as a coordination point for substrate.

This sequence belongs to the AB hydrolase superfamily. MetX family. In terms of assembly, homodimer.

Its subcellular location is the cytoplasm. It carries out the reaction L-homoserine + succinyl-CoA = O-succinyl-L-homoserine + CoA. It participates in amino-acid biosynthesis; L-methionine biosynthesis via de novo pathway; O-succinyl-L-homoserine from L-homoserine: step 1/1. Functionally, transfers a succinyl group from succinyl-CoA to L-homoserine, forming succinyl-L-homoserine. This chain is Homoserine O-succinyltransferase, found in Saccharophagus degradans (strain 2-40 / ATCC 43961 / DSM 17024).